We begin with the raw amino-acid sequence, 201 residues long: Large ribosomal subunit protein uL4 (201 aa).

Positions arginine 44–glycine 71 are disordered.

It belongs to the universal ribosomal protein uL4 family. Part of the 50S ribosomal subunit.

In terms of biological role, one of the primary rRNA binding proteins, this protein initially binds near the 5'-end of the 23S rRNA. It is important during the early stages of 50S assembly. It makes multiple contacts with different domains of the 23S rRNA in the assembled 50S subunit and ribosome. Its function is as follows. Forms part of the polypeptide exit tunnel. This Edwardsiella ictaluri (strain 93-146) protein is Large ribosomal subunit protein uL4.